Reading from the N-terminus, the 120-residue chain is Ragulator complex protein LAMTOR4 homolog (120 aa).

A disordered region spans residues 93–120 (QNGVTTTTSSSSSNSVYNDASDSGAVLA). A compositionally biased stretch (low complexity) spans 97–107 (TTTTSSSSSNS).

This sequence belongs to the LAMTOR4 family. In terms of assembly, part of the Ragulator complex composed of Lamtor3, Lamtor2, CG14184, CG14812, and Lamtor4.

Its subcellular location is the lysosome. Regulator of the TOR pathway, a signaling cascade that promotes cell growth in response to growth factors, energy levels, and amino acids. As part of the Ragulator complex, may activate the TOR signaling cascade in response to amino acids. In Drosophila melanogaster (Fruit fly), this protein is Ragulator complex protein LAMTOR4 homolog.